Consider the following 240-residue polypeptide: Axial regulator YABBY 3 (240 aa).

The C4-type zinc-finger motif lies at 30-57; it reads CSFCDTVLAVSVPPSSLFKTVTVRCGHC. Positions 135–156 are disordered; that stretch reads DHLQEMPRPPPANRPPEKRQRV.

The protein belongs to the YABBY family. Interacts with SPL/NZZ. Interacts with SPEAR2. Binds to LUG and LUH; these complexes promote adaxial cell identity in leaves as well as embryonic shoot apical meristem (SAM) initiation and postembryonic SAM maintenance. As to expression, expressed in abaxial regions of lateral aerial organ primordia leading to cotyledons, leaves, flower meristems, sepals, petals, stamen and carpels, but not in roots.

It is found in the nucleus. Involved in the abaxial cell fate determination during embryogenesis and organogenesis. Regulates the initiation of embryonic shoot apical meristem (SAM) development. Contributes to the repression of KNOX genes (STM, KNAT1/BP and KNAT2) to avoid ectopic meristems. Binds DNA without sequence specificity. The protein is Axial regulator YABBY 3 (YAB3) of Arabidopsis thaliana (Mouse-ear cress).